Reading from the N-terminus, the 243-residue chain is Uba3-binding protein but1 (243 aa).

The tract at residues 28–50 is disordered; that stretch reads KSTKKRRSSTKDEETRGMHPHIK.

Homodimer. Interacts with but2 and uba3.

It is found in the nucleus. Functionally, acts as a negative regulator of the NEDD8 pathway. Has a role in meiosis. The polypeptide is Uba3-binding protein but1 (but1) (Schizosaccharomyces pombe (strain 972 / ATCC 24843) (Fission yeast)).